The sequence spans 359 residues: Cyclin-Y-like protein 1 (359 aa).

Phosphoserine is present on residues Ser-67, Ser-105, and Ser-112. The region spanning 145 to 267 (VTLAIYYHIK…CQILKDITVE (123 aa)) is the Cyclin N-terminal domain. Position 344 is a phosphoserine (Ser-344).

Belongs to the cyclin family. Cyclin Y subfamily. Interacts with CDK16; this interaction mutually increases the stability of CDK16 and CCNYL1 and increases the kinase activity of CDK16.

It localises to the cell membrane. Key regulator of Wnt signaling implicated in various biological processes including male fertility, embryonic neurogenesis and cortex development. Activates the cyclin-dependent kinase CDK16, and promotes sperm maturation. The sequence is that of Cyclin-Y-like protein 1 from Homo sapiens (Human).